The chain runs to 509 residues: Photosystem II CP47 reaction center protein (509 aa).

The next 6 helical transmembrane spans lie at alanine 21–serine 36, isoleucine 101–tryptophan 115, glycine 140–phenylalanine 156, isoleucine 203–threonine 218, valine 237–threonine 252, and asparagine 457–arginine 472.

This sequence belongs to the PsbB/PsbC family. PsbB subfamily. In terms of assembly, PSII is composed of 1 copy each of membrane proteins PsbA, PsbB, PsbC, PsbD, PsbE, PsbF, PsbH, PsbI, PsbJ, PsbK, PsbL, PsbM, PsbT, PsbX, PsbY, PsbZ, Psb30/Ycf12, at least 3 peripheral proteins of the oxygen-evolving complex and a large number of cofactors. It forms dimeric complexes. It depends on Binds multiple chlorophylls. PSII binds additional chlorophylls, carotenoids and specific lipids. as a cofactor.

The protein resides in the plastid. It is found in the chloroplast thylakoid membrane. Its function is as follows. One of the components of the core complex of photosystem II (PSII). It binds chlorophyll and helps catalyze the primary light-induced photochemical processes of PSII. PSII is a light-driven water:plastoquinone oxidoreductase, using light energy to abstract electrons from H(2)O, generating O(2) and a proton gradient subsequently used for ATP formation. In Pyropia yezoensis (Susabi-nori), this protein is Photosystem II CP47 reaction center protein.